Here is a 301-residue protein sequence, read N- to C-terminus: Polyamine aminopropyltransferase (301 aa).

The region spanning 4–240 (WHWLLEWQTP…GLWGFVYGGV (237 aa)) is the PABS domain. Position 33 (Gln33) interacts with S-methyl-5'-thioadenosine. Positions 64 and 89 each coordinate spermidine. Residues Asp109 and 141 to 142 (DG) contribute to the S-methyl-5'-thioadenosine site. The active-site Proton acceptor is Asp159.

The protein belongs to the spermidine/spermine synthase family. In terms of assembly, homodimer or homotetramer.

It localises to the cytoplasm. It carries out the reaction S-adenosyl 3-(methylsulfanyl)propylamine + putrescine = S-methyl-5'-thioadenosine + spermidine + H(+). It functions in the pathway amine and polyamine biosynthesis; spermidine biosynthesis; spermidine from putrescine: step 1/1. Functionally, catalyzes the irreversible transfer of a propylamine group from the amino donor S-adenosylmethioninamine (decarboxy-AdoMet) to putrescine (1,4-diaminobutane) to yield spermidine. This chain is Polyamine aminopropyltransferase, found in Saccharolobus islandicus (strain Y.N.15.51 / Yellowstone #2) (Sulfolobus islandicus).